A 249-amino-acid polypeptide reads, in one-letter code: Homeobox protein TGIF2LX (249 aa).

Disordered stretches follow at residues 1–65 (MEAA…GYSP) and 126–199 (DPIV…PKKK). The segment covering 9 to 27 (AETRSRVEKDSRRAIKDSP) has biased composition (basic and acidic residues). The segment covering 28-46 (AKTQSPAQDTSIMLRNNAD) has biased composition (polar residues). A DNA-binding region (homeobox; TALE-type) is located at residues 55-118 (EHKKKRKGYS…INARRRILPD (64 aa)). Residues 159–172 (DNVQSLPLRSSPKG) show a composition bias toward polar residues.

The protein belongs to the TALE/TGIF homeobox family.

The protein resides in the nucleus. Its function is as follows. May have a transcription role in testis. This is Homeobox protein TGIF2LX (TGIF2LX) from Macaca mulatta (Rhesus macaque).